The primary structure comprises 392 residues: Ribosomal RNA large subunit methyltransferase G (392 aa).

The protein belongs to the methyltransferase superfamily. RlmG family.

It localises to the cytoplasm. It carries out the reaction guanosine(1835) in 23S rRNA + S-adenosyl-L-methionine = N(2)-methylguanosine(1835) in 23S rRNA + S-adenosyl-L-homocysteine + H(+). In terms of biological role, specifically methylates the guanine in position 1835 (m2G1835) of 23S rRNA. This chain is Ribosomal RNA large subunit methyltransferase G, found in Colwellia psychrerythraea (strain 34H / ATCC BAA-681) (Vibrio psychroerythus).